The chain runs to 115 residues: Con-Ins T1A (115 aa).

A signal peptide spans 1-24 (MTTSFYFLLMALGLLLYVCQSSFG). Residues 25 to 29 (NQHTR) constitute a propeptide that is removed on maturation. At Pro-34 the chain carries 4-hydroxyproline; partial. Disulfide bonds link Cys-38-Cys-101, Cys-50-Cys-114, and Cys-100-Cys-105. Position 41 is a 4-carboxyglutamate (Glu-41). Residues 53 to 94 (KRNDAGKKRGRASPLWQRGGSLSMLKARAKRNEAFHLQRAHR) constitute a propeptide, c peptide. Glu-98 is subject to 4-carboxyglutamate. A 4-hydroxyproline; partial modification is found at Pro-104. Glu-109 carries the post-translational modification 4-carboxyglutamate; partial. Cys-114 carries the cysteine amide modification.

The protein belongs to the insulin family. In terms of assembly, heterodimer of A and B chains; disulfide-linked. In terms of tissue distribution, expressed by the venom gland.

The protein resides in the secreted. This venom insulin, from a fish-hunting cone snail, facilitates prey capture by rapidly inducing hypoglycemic shock. It is one of the smallest known insulin found in nature and lacks the C-terminal segment of the B chain that, in human insulin, mediates engagement of the insulin receptor (INSR) and assembly of the hormone's hexameric storage form. Despite lacking this segment, it both binds and activates human insulin receptor (long isoform (HIR-B)) with a high potency (EC(50)=12.0 nM). In vivo, intraperitoneal injection of this peptide into zebrafish lowers blood glucose with a lower potency than human insulin. In addition, when applied to water, this peptide reduces overall locomotor activity of zebrafish larvae, observed as a significant decrease in the percentage of time spent swimming and movement frequency. When tested on a mouse model of diabetes, this insulin also lowers blood glucose with a 10-fold lower potency than human insulin. The polypeptide is Con-Ins T1A (Conus tulipa (Fish-hunting cone snail)).